We begin with the raw amino-acid sequence, 186 residues long: Ribosome-recycling factor (186 aa).

It belongs to the RRF family.

Its subcellular location is the cytoplasm. Responsible for the release of ribosomes from messenger RNA at the termination of protein biosynthesis. May increase the efficiency of translation by recycling ribosomes from one round of translation to another. The sequence is that of Ribosome-recycling factor from Chlorobium phaeobacteroides (strain DSM 266 / SMG 266 / 2430).